Consider the following 282-residue polypeptide: MGQIINGKEVALKIKEEIKTFVEERKKNKLRIPKIASILVGNDGGSIYYMSSQEKVANSLGVDFLKIILEENVTDDDVINEIHKLNDDVNVQGIMLQLPLPKHLNEKKIIKEISVKKDIDCLTFESQGKLYMGEKGFLPCTPNSVITLIKSLKIDITGKEVVVLGRSNIVGKPVAQLLLNENATVTICHSKTKDLKEVCSKADILVVAIGKPKFIDEEYIKENAIVIDVGTSSFEGKITGDVNFDKVIDKASFVTPVPGGVGALTTTLLIKNSCEALKEYED.

NADP(+) contacts are provided by residues 165 to 167 (GRS), Ser190, and Thr231.

The protein belongs to the tetrahydrofolate dehydrogenase/cyclohydrolase family. As to quaternary structure, homodimer.

The catalysed reaction is (6R)-5,10-methylene-5,6,7,8-tetrahydrofolate + NADP(+) = (6R)-5,10-methenyltetrahydrofolate + NADPH. The enzyme catalyses (6R)-5,10-methenyltetrahydrofolate + H2O = (6R)-10-formyltetrahydrofolate + H(+). Its pathway is one-carbon metabolism; tetrahydrofolate interconversion. Functionally, catalyzes the oxidation of 5,10-methylenetetrahydrofolate to 5,10-methenyltetrahydrofolate and then the hydrolysis of 5,10-methenyltetrahydrofolate to 10-formyltetrahydrofolate. The protein is Bifunctional protein FolD of Clostridium botulinum (strain Eklund 17B / Type B).